Here is a 689-residue protein sequence, read N- to C-terminus: Glycine--tRNA ligase beta subunit (689 aa).

This sequence belongs to the class-II aminoacyl-tRNA synthetase family. Tetramer of two alpha and two beta subunits.

It localises to the cytoplasm. It carries out the reaction tRNA(Gly) + glycine + ATP = glycyl-tRNA(Gly) + AMP + diphosphate. The chain is Glycine--tRNA ligase beta subunit from Shigella dysenteriae serotype 1 (strain Sd197).